We begin with the raw amino-acid sequence, 193 residues long: Bifunctional protein PyrR (193 aa).

Residues 57-58 (TR), Arg-98, 119-127 (DDVLYSGRS), Arg-152, and Val-176 contribute to the substrate site. Positions 115-127 (VILVDDVLYSGRS) match the PRPP-binding motif.

Belongs to the purine/pyrimidine phosphoribosyltransferase family. PyrR subfamily.

It carries out the reaction UMP + diphosphate = 5-phospho-alpha-D-ribose 1-diphosphate + uracil. In terms of biological role, regulates the transcription of the pyrimidine nucleotide (pyr) operon in response to exogenous pyrimidines. Also displays a weak uracil phosphoribosyltransferase activity which is not physiologically significant. In Mycobacterium bovis (strain ATCC BAA-935 / AF2122/97), this protein is Bifunctional protein PyrR.